The chain runs to 256 residues: MKTIDLNCDFGESFGVYRLGKEEILPYITSVNIACGFHAGDPLVMRQTVQLAIRHGVAIGAHPGFPDLLGFGRRMMAVSPEEVYAYVVYQIGALAAFVKAEGGVMTHVKPHGALYNMAAKDARISEAIAKAVYDVDPTLILYGLAGSELIRAGQAQGLQTASEVFADRTYQADGSLTPRSDPQAIIADEDEAVKQVLMMVCDRHVRSVQGTAVAIEADTVCLHGDNEQAVRFAKRLHAALQNEGIAIQAMRKETRR.

The protein belongs to the LamB/PxpA family. As to quaternary structure, forms a complex composed of PxpA, PxpB and PxpC.

The catalysed reaction is 5-oxo-L-proline + ATP + 2 H2O = L-glutamate + ADP + phosphate + H(+). Functionally, catalyzes the cleavage of 5-oxoproline to form L-glutamate coupled to the hydrolysis of ATP to ADP and inorganic phosphate. In Geobacillus thermodenitrificans (strain NG80-2), this protein is 5-oxoprolinase subunit A.